The sequence spans 196 residues: Vascular-related unknown protein 2 (196 aa).

The disordered stretch occupies residues 84-130 (ANNINTNPKKRRIIHQHKEEEEEELQKGEEEEEDEEDTASSPSNKTK). The segment covering 103–121 (EEEEELQKGEEEEEDEEDT) has biased composition (acidic residues).

Its function is as follows. Involved in the regulation of plant growth. The polypeptide is Vascular-related unknown protein 2 (Arabidopsis thaliana (Mouse-ear cress)).